A 1816-amino-acid chain; its full sequence is Laminin subunit alpha-4 (1816 aa).

A signal peptide spans 1-24; that stretch reads MGWSTAWCSVLALWLLWCAVCSNA. Serine 39 carries an O-linked (Xyl...) (chondroitin sulfate) serine glycan. 12 disulfide bridges follow: cysteine 82-cysteine 91, cysteine 84-cysteine 98, cysteine 101-cysteine 110, cysteine 113-cysteine 129, cysteine 132-cysteine 146, cysteine 134-cysteine 155, cysteine 157-cysteine 166, cysteine 169-cysteine 184, cysteine 187-cysteine 202, cysteine 189-cysteine 209, cysteine 212-cysteine 221, and cysteine 224-cysteine 238. 3 consecutive Laminin EGF-like domains span residues 82 to 131, 132 to 186, and 187 to 240; these read CDCN…FCQP, CPCP…TCKK, and CDCS…NCAV. Asparagine 104 is a glycosylation site (N-linked (GlcNAc...) asparagine). Asparagine 215 is a glycosylation site (N-linked (GlcNAc...) asparagine). The Laminin EGF-like 4; truncated domain occupies 241-255; sequence CNCGGGPCDSVTGEC. A domain II and I region spans residues 256–825; that stretch reads LEEGFEVPTG…AQTRSVASKI (570 aa). N-linked (GlcNAc...) asparagine glycans are attached at residues asparagine 308, asparagine 333, asparagine 458, asparagine 550, asparagine 571, asparagine 574, asparagine 631, and asparagine 639. Positions 431 to 523 form a coiled coil; sequence THRELVDEEA…ERVKEQMEVV (93 aa). The stretch at 556–604 forms a coiled coil; sequence AEIDGAKNELQGKLSNLSNLSHDLVQEATDHAYNLQQEADELSRNLHSS. The stretch at 655–717 forms a coiled coil; sequence IIYHKDESDN…AVKQLQAAER (63 aa). Residues 717–719 carry the Cell attachment site motif; that stretch reads RGD. N-linked (GlcNAc...) asparagine glycosylation is found at asparagine 735, asparagine 751, asparagine 754, asparagine 780, and asparagine 803. The stretch at 770–799 forms a coiled coil; the sequence is AVDSARDAVRNLTEVVPQLLDQLRTVEQKR. Laminin G-like domains are found at residues 826-1030, 1042-1222, and 1229-1397; these read QVSM…SVPC, AASY…GYGC, and SRRA…LYEC. A disulfide bond links cysteine 1000 and cysteine 1030. Residue asparagine 1088 is glycosylated (N-linked (GlcNAc...) asparagine). Cysteine 1196 and cysteine 1222 form a disulfide bridge. N-linked (GlcNAc...) asparagine glycosylation is found at asparagine 1283 and asparagine 1361. A disulfide bridge links cysteine 1365 with cysteine 1397. Positions 1409 to 1419 are enriched in basic residues; that stretch reads KKGKNSSKPKT. The tract at residues 1409 to 1433 is disordered; sequence KKGKNSSKPKTNKQGEKSKDAPSWD. The span at 1421–1430 shows a compositional bias: basic and acidic residues; it reads KQGEKSKDAP. 2 consecutive Laminin G-like domains span residues 1462–1633 and 1640–1813; these read AYQY…VTPC and TGTY…INSC. 2 disulfide bridges follow: cysteine 1610–cysteine 1633 and cysteine 1785–cysteine 1813.

In terms of assembly, laminin is a complex glycoprotein, consisting of three different polypeptide chains (alpha, beta, gamma), which are bound to each other by disulfide bonds into a cross-shaped molecule comprising one long and three short arms with globules at each end. Alpha-4 is a subunit of laminin-8 (laminin-411), laminin-9 (laminin-421) and laminin-14 (laminin-423). As to expression, strongly expressed in peripheral nerves, cardiac muscle, fat, dermis, lung stroma, aortic endothelium, endocardium and endothelium of blood vessels in skin and brain.

Its subcellular location is the secreted. The protein localises to the extracellular space. The protein resides in the extracellular matrix. It is found in the basement membrane. Functionally, binding to cells via a high affinity receptor, laminin is thought to mediate the attachment, migration and organization of cells into tissues during embryonic development by interacting with other extracellular matrix components. This is Laminin subunit alpha-4 (Lama4) from Mus musculus (Mouse).